We begin with the raw amino-acid sequence, 546 residues long: MAGLDNAVMVRDDQGNPFILVRDQEKKRRLHGIDAVKSHILATKTVANIVRTSLGPRGLDKILISPDGEITVTNDGATILDQMEVEHQIAKLLVQLSKSQDDEIGDGTTGVVVLAGALLEQAEALIDKGIHPIRIADGYEKACQVAVKHLDAISDVVDFSPENTTNLFRSAKTSLGSKVVSKAHDHFANIAVDAVLSVADLQRKDVDFELIKVDGKVGGSVDDTKLVKGVVVDKDMSHPQMPHRIENAKIAILTCPFEPPKPKTKHKLDITSVSEFEALQAYEKEKFQEMIKHVKDAGANLVICQWGFDDEANHLLLQNNLPAVRWVGGPEIELIAIATNGRIVPRFEDLSSDKLGSAGIVREVSFGTTRDKILVIEKCANSRAVTVFVRGSNKMIVDEAKRALHDALCVVRNLIRDNRVVYGGGAAEISCSLAVTKEAEKIPGIDQYSMGAFADALDTIPLALAENSGLSSIEALTAVKARHVKENKAYLGIDCLQTGSNDMRKQFVIDPLIGKKQQLLLATQLCRMVLKVNDIIVAGSKDDDYN.

Belongs to the TCP-1 chaperonin family. In terms of assembly, heterooligomeric complex of about 850 to 900 kDa that forms two stacked rings, 12 to 16 nm in diameter.

It is found in the cytoplasm. Molecular chaperone; assists the folding of proteins upon ATP hydrolysis. Known to play a role, in vitro, in the folding of actin and tubulin. The chain is T-complex protein 1 subunit epsilon (cct5) from Schizosaccharomyces pombe (strain 972 / ATCC 24843) (Fission yeast).